We begin with the raw amino-acid sequence, 519 residues long: MELASARLLRGQIPWRGLLLTASLLTYWSPLTTAQVTVDAVPPNVVEEKSVLLLAHNLPQEFQVFYWYKGTTLNPDSEIARYIRSDNMSKTGPAYSGRETIYSNGSLFFQNVNKTDERAYTLSVFDQQFNPIQTSVQFRVYPALQKPNVTGNNSNPMEGEPFVSLMCEPYTNNTSYLWSRNGESLSEGDRVTFSEGNRTLTLLNVRRTDKGYYECEARNPATFNRSDPFNLDVIYGPDAPVISPPDIYLHQGSNLNLSCHADSNPPAQYFWLINEKLQTSSQELFISNITTNNSGTYACFVNNTVTGLSRTTVKNITVFEPVTQPSIQITNTTVKELGSVTLTCFSKDTGVSVRWLFNSQSLQLTDRMTLSQDNSTLRIDPIKREDAGDYQCEISNPVSFRISHPIKLDVIPDPTQGNSGLSEGAIAGIVIGSVAGVALIAALAYFLYSRKTGGGSDHRDLTEHKPSTSSHNLGPSDDSPNKVDDVSYSVLNFNAQQSKRPTSASSSPTETVYSVVKKK.

Residues 1–34 (MELASARLLRGQIPWRGLLLTASLLTYWSPLTTA) form the signal peptide. Glutamine 35 is modified (pyrrolidone carboxylic acid). The Extracellular segment spans residues 35-425 (QVTVDAVPPN…QGNSGLSEGA (391 aa)). A required for homophilic binding region spans residues 39–142 (DAVPPNVVEE…QTSVQFRVYP (104 aa)). The Ig-like V-type domain maps to 42–140 (PPNVVEEKSV…PIQTSVQFRV (99 aa)). N-linked (GlcNAc...) asparagine glycosylation is found at asparagine 87, asparagine 104, asparagine 113, asparagine 148, asparagine 152, asparagine 173, asparagine 197, asparagine 224, asparagine 256, asparagine 288, asparagine 292, asparagine 302, asparagine 315, and asparagine 331. Ig-like C2-type domains are found at residues 147 to 232 (PNVT…FNLD), 237 to 317 (PDAP…KNIT), and 325 to 403 (PSIQ…FRIS). An intrachain disulfide couples cysteine 167 to cysteine 215. The cysteines at positions 259 and 299 are disulfide-linked. A disulfide bridge links cysteine 344 with cysteine 392. The N-linked (GlcNAc...) asparagine; atypical glycan is linked to asparagine 374. A helical transmembrane segment spans residues 426–446 (IAGIVIGSVAGVALIAALAYF). The interaction with calmodulin stretch occupies residues 445–457 (YFLYSRKTGGGSD). Topologically, residues 447-519 (LYSRKTGGGS…ETVYSVVKKK (73 aa)) are cytoplasmic. An interaction with FLNA region spans residues 447-519 (LYSRKTGGGS…ETVYSVVKKK (73 aa)). The interval 455–519 (GSDHRDLTEH…ETVYSVVKKK (65 aa)) is disordered. Over residues 456–466 (SDHRDLTEHKP) the composition is skewed to basic and acidic residues. The segment at 484 to 519 (DDVSYSVLNFNAQQSKRPTSASSSPTETVYSVVKKK) is required for interaction with PTPN11 and PTPN6 and for control of phosphorylation level. At tyrosine 488 the chain carries Phosphotyrosine; by SRC, LCK, INSR and EGFR. Over residues 489 to 512 (SVLNFNAQQSKRPTSASSSPTETV) the composition is skewed to polar residues. The residue at position 503 (serine 503) is a Phosphoserine. Position 513 is a phosphotyrosine; by INSR, SRC and LCK (tyrosine 513). An essential for interaction with PTPN11 and PTPN6 region spans residues 513-516 (YSVV).

Belongs to the immunoglobulin superfamily. CEA family. As to quaternary structure, monomer. Oligomer. Heterodimer. Homodimer. Cis-dimer/oligomer (via Ig-like C2-type and/or via cytoplasmic domains); induced by trans-homophilic cell adhesion through an allosteric mechanism transmitted by the Ig-like V-type domain, and is regulated by intracellular calcium and calmodulin. Interacts (via cytoplasmic domain) with calmodulin in a calcium dependent manner; reduces homophilic cell adhesion through dissociation of dimer. Isoform 1 interacts (via cytoplasmic domain) with PTPN11 (preferentially) and PTPN6; cis-homodimer form is preferred; this interaction is decreased by formation of isoform 1 / isoform 2 cis-heterodimers and is dependent on the monomer/dimer equilibrium; this interaction is phosphorylation-dependent. Isoform 1 interacts with LYN. Isoform 1 interacts (via cytoplasmic domain) with SRC (via SH2 domain); this interaction is regulated by trans-homophilic cell adhesion. Isoform 1 interacts (via cytoplasmic domain) with LCK; mediates phosphorylation at Tyr-488 and Tyr-513 resulting in PTPN6 association. Isoform 1 interacts with PTPN6; this interaction is phosphorylation-dependent and causes a profound decrease in TCR stimulation-induced CD247 and ZAP70 phosphorylation. Isoform 1 interacts with TCR/CD3 complex through TCR beta chain and CD3E; colocalizes at the cell surface and upon stimulation of the TCR/CD3 complex recruits PTPN6 in the TCR/CD3 complex, resulting in dephosphorylation of CD247 and ZAP70. Isoform 1 interacts (via cytoplasmic domain) with SHC1 (via SH2 domain); SHC1 mediates interaction with INSR or EGFR in a Ser-503 phosphorylation-dependent manner. Isoform 1 interacts with EGFR; the interaction is indirect. Isoform 1 interacts with CSF3R; down-regulates the CSF3R-STAT3 pathway through recruitment of PTPN6 that dephosphorylates CSF3R. Isoform 1 (phosphorylated form) interacts with TLR4 and SYK; recruits PTPN6 that dephosphorylates SYK, reducing the production of reactive oxygen species (ROS) and lysosome disruption, leading to a reduction of the inflammasome activity. Isoform 1 interacts with FLNA; inhibits cell migration and cell scattering by interfering with the interaction of FLNA with RALA. Isoform 1 interacts (via cytoplasmic domain) with PXN; the interaction is phosphotyrosyl-dependent. Isoform 1 interacts with KLRK1; recruits PTPN6 that dephosphorylates VAV1. Isoform 1 interacts with CEACAM8. Isoform 1 interacts with FASN; this interaction is insulin and phosphorylation-dependent; reduces fatty-acid synthase activity. Interacts (via Ig-like V-type) with HAVCR2 (via Ig-like V-type); facilitates the maturation and cell surface expression of HAVCR2 thereby regulating T-cell tolerance induction. Isoform 2 interacts (via the cytoplasmic domain) with ANXA2; this interaction is regulated by phosphorylation and appears in the AIIt complex. Interacts (via Lewis X moieties) with CD209 (via C-type lectin domain); this interaction is regulated by the glycosylation pattern of CEACAM1 on cell types and regulates contact between dendritic cells and neutrophils. Phosphorylated on serine and tyrosine. Isoform 1 is phosphorylated on tyrosine by Src family kinases like SRC and LCK and by receptor like CSF3R, EGFR and INSR upon stimulation. Phosphorylated at Ser-503; mediates activity. Phosphorylated at Tyr-488; regulates activity. Phosphorylated at Tyr-488 by EGFR and INSR upon stimulation; this phosphorylation is Ser-503-phosphorylation-dependent; mediates cellular internalization; increases interaction with FASN. Phosphorylated at Tyr-488 and Tyr-513 by LCK; mediates PTPN6 association and is regulated by homophilic ligation of CEACAM1 in the absence of T-cell activation. Phosphorylated at Tyr-513; mediates interaction with PTPN11. In terms of processing, phosphorylated on serine and threonine. In terms of tissue distribution, expressed in epithelia, vessel endothelia, leukocytes and platelets. Isoform 1 and isoform 2 are highly expressed in liver and intestine, moderately in lung, and weakly in muscle, kidney, and spleen. Expressed in granulocytes, lymphocytes, granulocytes, B cells, and T-cells.

Its subcellular location is the cell membrane. It localises to the lateral cell membrane. The protein localises to the apical cell membrane. The protein resides in the basal cell membrane. It is found in the cell junction. Its subcellular location is the adherens junction. It localises to the cytoplasmic vesicle. The protein localises to the secretory vesicle. The protein resides in the cell projection. It is found in the microvillus membrane. Its function is as follows. Cell adhesion protein that mediates homophilic cell adhesion in a calcium-independent manner. Plays a role as coinhibitory receptor in immune response, insulin action and also functions as an activator during angiogenesis. Its coinhibitory receptor function is phosphorylation- and PTPN6 -dependent, which in turn, suppress signal transduction of associated receptors by dephosphorylation of their downstream effectors. Plays a role in immune response, of T-cells, natural killer (NK) and neutrophils. Upon TCR/CD3 complex stimulation, inhibits TCR-mediated cytotoxicity by blocking granule exocytosis by mediating homophilic binding to adjacent cells, allowing interaction with and phosphorylation by LCK and interaction with the TCR/CD3 complex which recruits PTPN6 resulting in dephosphorylation of CD247 and ZAP70. Also inhibits T-cell proliferation and cytokine production through inhibition of JNK cascade and plays a crucial role in regulating autoimmunity and anti-tumor immunity by inhibiting T-cell through its interaction with HAVCR2. Upon natural killer (NK) cells activation, inhibit KLRK1-mediated cytolysis of CEACAM1-bearing tumor cells by trans-homophilic interactions with CEACAM1 on the target cell and lead to cis-interaction between CEACAM1 and KLRK1, allowing PTPN6 recruitment and then VAV1 dephosphorylation. Upon neutrophils activation negatively regulates IL1B production by recruiting PTPN6 to a SYK-TLR4-CEACAM1 complex, that dephosphorylates SYK, reducing the production of reactive oxygen species (ROS) and lysosome disruption, which in turn, reduces the activity of the inflammasome. Down-regulates neutrophil production by acting as a coinhibitory receptor for CSF3R by downregulating the CSF3R-STAT3 pathway through recruitment of PTPN6 that dephosphorylates CSF3R. Also regulates insulin action by promoting INS clearance and regulating lipogenesis in liver through regulating insulin signaling. Upon INS stimulation, undergoes phosphorylation by INSR leading to INS clearance by increasing receptor-mediated insulin endocytosis. This inernalization promotes interaction with FASN leading to receptor-mediated insulin degradation and to reduction of FASN activity leading to negative regulation of fatty acid synthesis. INSR-mediated phosphorylation also provokes a down-regulation of cell proliferation through SHC1 interaction resulting in decrease coupling of SHC1 to the MAPK3/ERK1-MAPK1/ERK2 and phosphatidylinositol 3-kinase pathways. Functions as activator in angiogenesis by promoting blood vessel remodeling through endothelial cell differentiation and migration and in arteriogenesis by increasing the number of collateral arteries and collateral vessel calibers after ischemia. Also regulates vascular permeability through the VEGFR2 signaling pathway resulting in control of nitric oxide production. Down-regulates cell growth in response to EGF through its interaction with SHC1 that mediates interaction with EGFR resulting in decrease coupling of SHC1 to the MAPK3/ERK1-MAPK1/ERK2 pathway. Negatively regulates platelet aggregation by decreasing platelet adhesion on type I collagen through the GPVI-FcRgamma complex. Inhibits cell migration and cell scattering through interaction with FLNA; interferes with the interaction of FLNA with RALA. Mediates bile acid transport activity in a phosphorylation dependent manner. Negatively regulates osteoclastogenesis. Functionally, cell adhesion proteins that mediates homophilic cell adhesion in a calcium-independent manner. Promotes populations of T-cells regulating IgA production and secretion associated with control of the commensal microbiota and resistance to enteropathogens. The sequence is that of Cell adhesion molecule CEACAM1 from Rattus norvegicus (Rat).